Here is a 754-residue protein sequence, read N- to C-terminus: Glutathione biosynthesis bifunctional protein GshAB (754 aa).

A glutamate--cysteine ligase region spans residues methionine 1–alanine 332. The ATP-grasp domain occupies lysine 488–phenylalanine 746. Proline 515–arginine 573 contacts ATP. Mg(2+)-binding residues include aspartate 695, glutamate 716, and asparagine 718. Mn(2+) contacts are provided by aspartate 695, glutamate 716, and asparagine 718.

The protein in the N-terminal section; belongs to the glutamate--cysteine ligase type 1 family. Type 2 subfamily. As to quaternary structure, monomer. Requires Mg(2+) as cofactor. Mn(2+) is required as a cofactor.

It catalyses the reaction L-cysteine + L-glutamate + ATP = gamma-L-glutamyl-L-cysteine + ADP + phosphate + H(+). It carries out the reaction gamma-L-glutamyl-L-cysteine + glycine + ATP = glutathione + ADP + phosphate + H(+). It functions in the pathway sulfur metabolism; glutathione biosynthesis; glutathione from L-cysteine and L-glutamate: step 1/2. It participates in sulfur metabolism; glutathione biosynthesis; glutathione from L-cysteine and L-glutamate: step 2/2. Functionally, synthesizes glutathione from L-glutamate and L-cysteine via gamma-L-glutamyl-L-cysteine. In Streptococcus thermophilus (strain CNRZ 1066), this protein is Glutathione biosynthesis bifunctional protein GshAB.